A 140-amino-acid polypeptide reads, in one-letter code: Hemoglobin subunit beta (140 aa).

Residues 1-140 (GGSDVSAFLA…VGEALAKGYH (140 aa)) form the Globin domain. The heme b site is built by histidine 57 and histidine 86.

This sequence belongs to the globin family. In terms of assembly, heterotetramer of either two alpha-B chains or two alpha-C chains and two beta chains.

The beta chain is a component of adult hemoglobins B. And C. This Aquarana catesbeiana (American bullfrog) protein is Hemoglobin subunit beta (HBB).